The chain runs to 480 residues: 3,6-anhydro-alpha-L-galactose dehydrogenase (480 aa).

NADP(+) contacts are provided by residues 149-150, 173-176, and 226-227; these read WN, KPTS, and GS. E248 (proton acceptor) is an active-site residue. L249 provides a ligand contact to NADP(+). C282 (nucleophile) is an active-site residue. E383 provides a ligand contact to NADP(+).

This sequence belongs to the aldehyde dehydrogenase family.

It carries out the reaction 3,6-anhydro-alpha-L-galactopyranose + NADP(+) + H2O = 3,6-anhydro-L-galactonate + NADPH + 2 H(+). The enzyme catalyses 3,6-anhydro-alpha-L-galactopyranose + NAD(+) + H2O = 3,6-anhydro-L-galactonate + NADH + 2 H(+). Involved in the degradation of 3,6-anhydro-L-galactose, which is the major monomeric sugar of red macroalgae. Catalyzes the oxidation of 3,6-anhydro-L-galactose (AHG) to form 3,6-anhydrogalactonate (AHGA). The chain is 3,6-anhydro-alpha-L-galactose dehydrogenase from Vibrio sp. (strain EJY3).